A 400-amino-acid polypeptide reads, in one-letter code: Subtilisin-like protease 7 (400 aa).

Residues 1–20 (MGFITKAIPLALAAASVING) form the signal peptide. The propeptide occupies 21-119 (AEILETRAGV…IERDARVQIN (99 aa)). Positions 36 to 118 (KYIVVMNDGI…YIERDARVQI (83 aa)) constitute an Inhibitor I9 domain. In terms of domain architecture, Peptidase S8 spans 129–400 (SWGLARVGSK…SKLINNGSGM (272 aa)). Active-site charge relay system residues include D161 and H192. N252 carries an N-linked (GlcNAc...) asparagine glycan. Catalysis depends on S346, which acts as the Charge relay system. A glycan (N-linked (GlcNAc...) asparagine) is linked at N396.

It belongs to the peptidase S8 family.

Its subcellular location is the secreted. In terms of biological role, secreted subtilisin-like serine protease with keratinolytic activity that contributes to pathogenicity. The polypeptide is Subtilisin-like protease 7 (SUB7) (Trichophyton violaceum).